The primary structure comprises 257 residues: Imidazole glycerol phosphate synthase subunit HisF (257 aa).

Residues Asp-12 and Asp-131 contribute to the active site.

Belongs to the HisA/HisF family. As to quaternary structure, heterodimer of HisH and HisF.

Its subcellular location is the cytoplasm. It carries out the reaction 5-[(5-phospho-1-deoxy-D-ribulos-1-ylimino)methylamino]-1-(5-phospho-beta-D-ribosyl)imidazole-4-carboxamide + L-glutamine = D-erythro-1-(imidazol-4-yl)glycerol 3-phosphate + 5-amino-1-(5-phospho-beta-D-ribosyl)imidazole-4-carboxamide + L-glutamate + H(+). It functions in the pathway amino-acid biosynthesis; L-histidine biosynthesis; L-histidine from 5-phospho-alpha-D-ribose 1-diphosphate: step 5/9. In terms of biological role, IGPS catalyzes the conversion of PRFAR and glutamine to IGP, AICAR and glutamate. The HisF subunit catalyzes the cyclization activity that produces IGP and AICAR from PRFAR using the ammonia provided by the HisH subunit. The chain is Imidazole glycerol phosphate synthase subunit HisF from Teredinibacter turnerae (strain ATCC 39867 / T7901).